The primary structure comprises 235 residues: Calcium-activated potassium channel subunit beta-2 (235 aa).

A ball and chain region spans residues 1–45; the sequence is MFIWTSGRTSSSYRHDEKRNIYQKIRDHDLLDKRKTVTALKAGED. Residues 1 to 46 are Cytoplasmic-facing; the sequence is MFIWTSGRTSSSYRHDEKRNIYQKIRDHDLLDKRKTVTALKAGEDR. The helical transmembrane segment at 47-67 threads the bilayer; that stretch reads AILLGLAMMVCSIMMYFLLGI. Residues 68–194 are Extracellular-facing; sequence TLLRSYMQSV…VILTKLYSSN (127 aa). N-linked (GlcNAc...) asparagine glycans are attached at residues Asn-88, Asn-96, and Asn-119. Residues 195–215 traverse the membrane as a helical segment; sequence VLFHSLFWPTCMMAGGVAIVA. Residues 216–235 lie on the Cytoplasmic side of the membrane; that stretch reads MVKLTQYLSLLCERIQRINR.

Belongs to the KCNMB (TC 8.A.14.1) family. KCNMB2 subfamily. In terms of assembly, interacts with KCNMA1 tetramer. There are probably 4 molecules of KCMNB2 per KCNMA1 tetramer. N-glycosylated. As to expression, highly expressed in brain and heart. Also expressed in lung.

It is found in the membrane. Regulatory subunit of the calcium activated potassium KCNMA1 (maxiK) channel. Modulates the calcium sensitivity and gating kinetics of KCNMA1, thereby contributing to KCNMA1 channel diversity. Acts as a negative regulator that confers rapid and complete inactivation of KCNMA1 channel complex. The protein is Calcium-activated potassium channel subunit beta-2 (Kcnmb2) of Rattus norvegicus (Rat).